Consider the following 268-residue polypeptide: Enoyl-[acyl-carrier-protein] reductase [NADH] (268 aa).

Residues 20 to 21 (SI), 64 to 65 (DV), and 95 to 96 (IA) each bind NAD(+). Substrate is bound at residue tyrosine 157. NAD(+)-binding residues include lysine 164 and isoleucine 193.

This sequence belongs to the short-chain dehydrogenases/reductases (SDR) family. FabI subfamily. In terms of assembly, homodimer. Homotetramer.

It carries out the reaction a 2,3-saturated acyl-[ACP] + NAD(+) = a (2E)-enoyl-[ACP] + NADH + H(+). The catalysed reaction is a 2,3-saturated acyl-CoA + NAD(+) = a (2E)-enoyl-CoA + NADH + H(+). It functions in the pathway lipid metabolism; mycolic acid biosynthesis. In terms of biological role, enoyl-ACP reductase of the type II fatty acid syntase (FAS-II) system, which is involved in the biosynthesis of mycolic acids, a major component of mycobacterial cell walls. Catalyzes the NADH-dependent reduction of the double bond of 2-trans-enoyl-[acyl-carrier protein], an essential step in the fatty acid elongation cycle of the FAS-II pathway. Shows preference for long-chain fatty acyl thioester substrates, and can also use 2-trans-enoyl-CoAs as alternative substrates. The mycobacterial FAS-II system utilizes the products of the FAS-I system as primers to extend fatty acyl chain lengths up to C56, forming the meromycolate chain that serves as the precursor for final mycolic acids. The sequence is that of Enoyl-[acyl-carrier-protein] reductase [NADH] from Mycobacterium avium.